The sequence spans 433 residues: Enolase (433 aa).

Residue glutamine 164 participates in (2R)-2-phosphoglycerate binding. The Proton donor role is filled by glutamate 206. Positions 243, 289, and 316 each coordinate Mg(2+). (2R)-2-phosphoglycerate-binding residues include lysine 341, arginine 370, serine 371, and lysine 392. Lysine 341 functions as the Proton acceptor in the catalytic mechanism.

It belongs to the enolase family. Mg(2+) is required as a cofactor.

It is found in the cytoplasm. It localises to the secreted. The protein localises to the cell surface. The catalysed reaction is (2R)-2-phosphoglycerate = phosphoenolpyruvate + H2O. Its pathway is carbohydrate degradation; glycolysis; pyruvate from D-glyceraldehyde 3-phosphate: step 4/5. Catalyzes the reversible conversion of 2-phosphoglycerate (2-PG) into phosphoenolpyruvate (PEP). It is essential for the degradation of carbohydrates via glycolysis. In Borreliella afzelii (strain PKo) (Borrelia afzelii), this protein is Enolase.